Here is a 946-residue protein sequence, read N- to C-terminus: Altered inheritance of mitochondria protein 3 (946 aa).

Disordered regions lie at residues 1-333 (MGFW…PQMN) and 351-903 (MSST…KSLE). The segment covering 36-54 (ASKKHYNNSKARRERKSGK) has biased composition (basic residues). Phosphoserine is present on residues serine 57, serine 58, and serine 64. Over residues 59-68 (DEEYESEDEM) the composition is skewed to acidic residues. Basic and acidic residues predominate over residues 69–84 (EHERKPTDIRSLKDPK). Low complexity-rich tracts occupy residues 93 to 105 (PGQK…QQQQ) and 130 to 158 (QSQY…PPIY). A compositionally biased stretch (polar residues) spans 166 to 244 (GSNSNATSYQ…YVSHGSTNLG (79 aa)). Low complexity-rich tracts occupy residues 245-267 (QSQF…VLPS) and 306-320 (QQQQ…QQQQ). Over residues 351–364 (MSSTTNMQDSNPSY) the composition is skewed to polar residues. Pro residues predominate over residues 376-392 (GGQPPVPVRMQPQPPQP). Over residues 463 to 472 (IQPNTTSSAA) the composition is skewed to polar residues. At serine 473 the chain carries Phosphoserine. Basic and acidic residues-rich tracts occupy residues 485-499 (DNER…DEST), 523-538 (HGLD…KNAS), and 608-625 (EIKD…DRNV). Low complexity-rich tracts occupy residues 627 to 642 (PSLL…SQSQ) and 666 to 675 (SQSSNSSDSS). Threonine 728 carries the phosphothreonine modification. Basic and acidic residues predominate over residues 748–758 (DSSKDANKYEK). The span at 762 to 773 (PVTSSIQAQQST) shows a compositional bias: polar residues. Phosphothreonine is present on threonine 860. Over residues 861–878 (PPRPPPSRSSPKKVPPVV) the composition is skewed to pro residues. Positions 887–898 (KKPPVVPKKKPL) are enriched in basic residues.

The protein belongs to the AIM3 family. Interacts with RVS167.

The protein resides in the membrane raft. The chain is Altered inheritance of mitochondria protein 3 (AIM3) from Saccharomyces cerevisiae (strain Lalvin EC1118 / Prise de mousse) (Baker's yeast).